A 141-amino-acid polypeptide reads, in one-letter code: Single-stranded DNA-binding protein 2 (141 aa).

The SSB domain maps to Met-1–Glu-104. Positions Glu-104–Phe-141 are disordered. The segment covering Asn-107–Asn-127 has biased composition (low complexity).

As to quaternary structure, homotetramer.

The sequence is that of Single-stranded DNA-binding protein 2 (ssb-p) from Staphylococcus aureus (strain Mu50 / ATCC 700699).